Here is an 881-residue protein sequence, read N- to C-terminus: Alanine--tRNA ligase (881 aa).

4 residues coordinate Zn(2+): H564, H568, C666, and H670.

The protein belongs to the class-II aminoacyl-tRNA synthetase family. The cofactor is Zn(2+).

The protein localises to the cytoplasm. The catalysed reaction is tRNA(Ala) + L-alanine + ATP = L-alanyl-tRNA(Ala) + AMP + diphosphate. Functionally, catalyzes the attachment of alanine to tRNA(Ala) in a two-step reaction: alanine is first activated by ATP to form Ala-AMP and then transferred to the acceptor end of tRNA(Ala). Also edits incorrectly charged Ser-tRNA(Ala) and Gly-tRNA(Ala) via its editing domain. The sequence is that of Alanine--tRNA ligase from Caldicellulosiruptor saccharolyticus (strain ATCC 43494 / DSM 8903 / Tp8T 6331).